We begin with the raw amino-acid sequence, 538 residues long: Bifunctional purine biosynthesis protein PurH (538 aa).

One can recognise an MGS-like domain in the interval Ile-8 to Thr-158.

It belongs to the PurH family.

It catalyses the reaction (6R)-10-formyltetrahydrofolate + 5-amino-1-(5-phospho-beta-D-ribosyl)imidazole-4-carboxamide = 5-formamido-1-(5-phospho-D-ribosyl)imidazole-4-carboxamide + (6S)-5,6,7,8-tetrahydrofolate. The catalysed reaction is IMP + H2O = 5-formamido-1-(5-phospho-D-ribosyl)imidazole-4-carboxamide. The protein operates within purine metabolism; IMP biosynthesis via de novo pathway; 5-formamido-1-(5-phospho-D-ribosyl)imidazole-4-carboxamide from 5-amino-1-(5-phospho-D-ribosyl)imidazole-4-carboxamide (10-formyl THF route): step 1/1. It participates in purine metabolism; IMP biosynthesis via de novo pathway; IMP from 5-formamido-1-(5-phospho-D-ribosyl)imidazole-4-carboxamide: step 1/1. The polypeptide is Bifunctional purine biosynthesis protein PurH (Rhizobium etli (strain ATCC 51251 / DSM 11541 / JCM 21823 / NBRC 15573 / CFN 42)).